The following is a 348-amino-acid chain: Protein RecA (348 aa).

ATP is bound at residue 65-72; that stretch reads GPESSGKT. The tract at residues 328-348 is disordered; that stretch reads SKPQAETSARLATQEELADDY.

It belongs to the RecA family.

The protein resides in the cytoplasm. Its function is as follows. Can catalyze the hydrolysis of ATP in the presence of single-stranded DNA, the ATP-dependent uptake of single-stranded DNA by duplex DNA, and the ATP-dependent hybridization of homologous single-stranded DNAs. It interacts with LexA causing its activation and leading to its autocatalytic cleavage. The sequence is that of Protein RecA from Ectopseudomonas oleovorans (Pseudomonas oleovorans).